The primary structure comprises 31 residues: Cytochrome b6-f complex subunit 6 (31 aa).

The helical transmembrane segment at Ile4–Ser26 threads the bilayer.

The protein belongs to the PetL family. The 4 large subunits of the cytochrome b6-f complex are cytochrome b6, subunit IV (17 kDa polypeptide, PetD), cytochrome f and the Rieske protein, while the 4 small subunits are PetG, PetL, PetM and PetN. The complex functions as a dimer.

Its subcellular location is the plastid. The protein resides in the chloroplast thylakoid membrane. Component of the cytochrome b6-f complex, which mediates electron transfer between photosystem II (PSII) and photosystem I (PSI), cyclic electron flow around PSI, and state transitions. PetL is important for photoautotrophic growth as well as for electron transfer efficiency and stability of the cytochrome b6-f complex. The chain is Cytochrome b6-f complex subunit 6 from Lactuca sativa (Garden lettuce).